We begin with the raw amino-acid sequence, 336 residues long: Fimbrial adhesin PapGII (336 aa).

The N-terminal stretch at 1–20 (MKKWFPALLFSLCVSGESSA) is a signal peptide. Intrachain disulfides connect C64/C138 and C217/C249. D-galactose is bound by residues E79 and 124–127 (GYKW).

This sequence belongs to the adhesin PapG family.

The protein localises to the secreted. It localises to the fimbrium. Tip adhesin component of type P pili that plays a critical role in kidney infection through targeted interaction with the globoseries glycolipids containing the Gal-alpha(1-4)-Gal disaccharide present on uroepithelial cells. In turn, transcriptionally regulates host gene expression in kidney cells, leading to inflammatory pathway activation and renal tissue damage. Acts thereby as key determinant of invasive uropathogenic E.coli (UPEC), which cause pyelonephritis and urinary-source bacteremia. This chain is Fimbrial adhesin PapGII, found in Escherichia coli.